The chain runs to 430 residues: Serine--tRNA ligase (430 aa).

Residue 237–239 (TAE) participates in L-serine binding. An ATP-binding site is contributed by 268-270 (RSE). Glu-291 is an L-serine binding site. 355–358 (EISS) is an ATP binding site. Ser-391 contacts L-serine.

This sequence belongs to the class-II aminoacyl-tRNA synthetase family. Type-1 seryl-tRNA synthetase subfamily. In terms of assembly, homodimer. The tRNA molecule binds across the dimer.

It is found in the cytoplasm. The catalysed reaction is tRNA(Ser) + L-serine + ATP = L-seryl-tRNA(Ser) + AMP + diphosphate + H(+). It catalyses the reaction tRNA(Sec) + L-serine + ATP = L-seryl-tRNA(Sec) + AMP + diphosphate + H(+). The protein operates within aminoacyl-tRNA biosynthesis; selenocysteinyl-tRNA(Sec) biosynthesis; L-seryl-tRNA(Sec) from L-serine and tRNA(Sec): step 1/1. Functionally, catalyzes the attachment of serine to tRNA(Ser). Is also able to aminoacylate tRNA(Sec) with serine, to form the misacylated tRNA L-seryl-tRNA(Sec), which will be further converted into selenocysteinyl-tRNA(Sec). This Klebsiella pneumoniae (strain 342) protein is Serine--tRNA ligase.